We begin with the raw amino-acid sequence, 251 residues long: Putative F-box protein L166 (251 aa).

Residues 1-46 (MDNICELFDEILPLIIEYLSDHDKVKFMTTCSRLYYFIDKVYYENI) enclose the F-box domain. The interval 188–251 (PEPESQENFR…RPKSFMKYRR (64 aa)) is disordered. The segment covering 202 to 217 (TESNNNKPVNKSQPQI) has biased composition (polar residues). Positions 241-251 (KRPKSFMKYRR) are enriched in basic residues.

This chain is Putative F-box protein L166, found in Acanthamoeba polyphaga (Amoeba).